The following is a 333-amino-acid chain: Tetraacyldisaccharide 4'-kinase (333 aa).

55 to 62 serves as a coordination point for ATP; that stretch reads TIGGNGKT.

The protein belongs to the LpxK family.

The enzyme catalyses a lipid A disaccharide + ATP = a lipid IVA + ADP + H(+). The protein operates within glycolipid biosynthesis; lipid IV(A) biosynthesis; lipid IV(A) from (3R)-3-hydroxytetradecanoyl-[acyl-carrier-protein] and UDP-N-acetyl-alpha-D-glucosamine: step 6/6. Its function is as follows. Transfers the gamma-phosphate of ATP to the 4'-position of a tetraacyldisaccharide 1-phosphate intermediate (termed DS-1-P) to form tetraacyldisaccharide 1,4'-bis-phosphate (lipid IVA). The chain is Tetraacyldisaccharide 4'-kinase from Blochmanniella floridana.